Reading from the N-terminus, the 62-residue chain is Pro-MCH variant (62 aa).

An NGE-like region spans residues 23–41 (GSVAFPAENGVQDTESTQE). Residues 28–62 (PAENGVQDTESTQEKRETGDEENSAQFPIGRRDFD) are disordered. Residues 44 to 56 (ETGDEENSAQFPI) form an NEI-like region. The segment at 60-62 (DFD) is melanin-concentrating hormone-like.

The protein belongs to the melanin-concentrating hormone family.

The chain is Pro-MCH variant (PMCHL1) from Hylobates lar (Lar gibbon).